The primary structure comprises 581 residues: Pentatricopeptide repeat-containing protein At1g34160 (581 aa).

9 PPR repeats span residues 67 to 101 (LTNDWNAIIRGFAGSSHPSLAFSWYRSMLQQSSSS), 108 to 142 (DALTCSFTLKACARALCSSAMDQLHCQINRRGLSA), 143 to 173 (DSLLCTTLLDAYSKNGDLISAYKLFDEMPVR), 174 to 208 (DVASWNALIAGLVSGNRASEAMELYKRMETEGIRR), 209 to 239 (SEVTVVAALGACSHLGDVKEGENIFHGYSND), 240 to 270 (NVIVSNAAIDMYSKCGFVDKAYQVFEQFTGK), 272 to 306 (SVVTWNTMITGFAVHGEAHRALEIFDKLEDNGIKP), 307 to 341 (DDVSYLAALTACRHAGLVEYGLSVFNNMACKGVER), and 342 to 372 (NMKHYGCVVDLLSRAGRLREAHDIICSMSMI). A type E motif region spans residues 377 to 452 (LWQSLLGASE…IPGLSYIEAK (76 aa)). Residues 453 to 483 (GTIHEFYNSDKSHEQWREIYEKIDEIRFKIR) are type E(+) motif. Positions 484 to 581 (EDGYVAQTGL…DGSCSCRDFW (98 aa)) are type DYW motif.

This sequence belongs to the PPR family. PCMP-H subfamily.

The polypeptide is Pentatricopeptide repeat-containing protein At1g34160 (PCMP-H68) (Arabidopsis thaliana (Mouse-ear cress)).